The sequence spans 437 residues: MLPTPSRSHKLSGYAAVLFFLWLVCSPAQAALNIEIFGGGANQIPVAIVPFSGEEGLGAQSLTPVISADLQRTGLFKLVDPGGLRPHEPVEVSFPDWINRGASALAIGTAIPVSGGQISIRVRLLDVARQAELGSYVETVAPEQLRAAAHRIADMIYEKLTGDVGVFSTRIAYVIKQGKKYSLQVADADGFNAQPVIEYTEPIISPAWSPDGTRLAYVSFENKKPVVYVQTLATRTRKAVANFRGSNSAPAWSPDGRKLAVVLSVMGGSQIFLINSDGGGLQRLTQSSGIDTEPSFSPDGRYIIFTSDRGGSPQIYRMPVTGGVSKVAERLTFEGSYNVSPRYSPDGKGFTFIHRSGDRFNVAIQDFATGQVRLLTDSRFDESPSFAPNGRMVLYATEIRGRGILSAVSSDGRTRQQLSTQTGDIREPAWGPLRRLQ.

The first 30 residues, 1 to 30, serve as a signal peptide directing secretion; sequence MLPTPSRSHKLSGYAAVLFFLWLVCSPAQA. Over residues 410 to 423 the composition is skewed to polar residues; sequence SDGRTRQQLSTQTG. A disordered region spans residues 410–437; sequence SDGRTRQQLSTQTGDIREPAWGPLRRLQ.

It belongs to the TolB family. The Tol-Pal system is composed of five core proteins: the inner membrane proteins TolA, TolQ and TolR, the periplasmic protein TolB and the outer membrane protein Pal. They form a network linking the inner and outer membranes and the peptidoglycan layer.

The protein localises to the periplasm. Part of the Tol-Pal system, which plays a role in outer membrane invagination during cell division and is important for maintaining outer membrane integrity. The polypeptide is Tol-Pal system protein TolB (Nitrosospira multiformis (strain ATCC 25196 / NCIMB 11849 / C 71)).